We begin with the raw amino-acid sequence, 351 residues long: Transmembrane protein 185-like (351 aa).

The next 8 helical transmembrane spans lie at 16 to 36, 41 to 61, 81 to 101, 113 to 133, 154 to 174, 178 to 198, 212 to 232, and 244 to 264; these read LIYA…DGII, WAVF…ASVG, FKAM…EVLV, WLLV…ACVW, FIFI…VVCV, ILMS…VLFL, ITMA…EILL, and YVPV…TTFG.

It belongs to the TMEM185 family.

It localises to the membrane. This chain is Transmembrane protein 185-like, found in Danio rerio (Zebrafish).